We begin with the raw amino-acid sequence, 765 residues long: ATP-dependent RNA helicase DBP4 (765 aa).

Residues 48–76 carry the Q motif motif; sequence SQFSDLPITENTLKGLKEATFVSLTDIQK. Residues 79–253 form the Helicase ATP-binding domain; it reads IPIALKGEDL…RLSLTNPNKI (175 aa). An ATP-binding site is contributed by 92–99; the sequence is ARTGSGKT. Residues 201 to 204 carry the DEAD box motif; it reads DEAD. A Helicase C-terminal domain is found at 267 to 439; it reads SLEQYYVKVP…SIRPQLQSLC (173 aa). Composition is skewed to basic and acidic residues over residues 655 to 668 and 720 to 738; these read KISD…ERQK and PVSK…KSKN. Residues 655 to 765 form a disordered region; it reads KISDITDKEV…ESLTARLIGN (111 aa). A compositionally biased stretch (acidic residues) spans 744–756; sequence VEYDEPETLEDLE.

This sequence belongs to the DEAD box helicase family. DDX10/DBP4 subfamily. Interacts with the U3 and U14 snoRNAs. Associates with pre-ribosomal complexes.

It localises to the nucleus. It is found in the nucleolus. It carries out the reaction ATP + H2O = ADP + phosphate + H(+). Functionally, ATP-dependent RNA helicase required for ribosome biogenesis. Involved in the release of U14 snoRNA in pre-ribosomal complexes. Required for pre-rRNA cleavage at site A2. This chain is ATP-dependent RNA helicase DBP4 (DBP4), found in Candida albicans (strain SC5314 / ATCC MYA-2876) (Yeast).